Reading from the N-terminus, the 170-residue chain is Lipoprotein signal peptidase (170 aa).

4 helical membrane passes run 11–31 (LSWL…KFYF), 41–61 (IVVI…AAFS), 69–89 (WQRW…VVWL), and 95–115 (NETW…GNLY). Active-site residues include Asp-125 and Asp-144. Residues 136–156 (YFPAFNFADSAITVGAVMLAL) traverse the membrane as a helical segment.

This sequence belongs to the peptidase A8 family.

The protein localises to the cell inner membrane. The enzyme catalyses Release of signal peptides from bacterial membrane prolipoproteins. Hydrolyzes -Xaa-Yaa-Zaa-|-(S,diacylglyceryl)Cys-, in which Xaa is hydrophobic (preferably Leu), and Yaa (Ala or Ser) and Zaa (Gly or Ala) have small, neutral side chains.. The protein operates within protein modification; lipoprotein biosynthesis (signal peptide cleavage). Its function is as follows. This protein specifically catalyzes the removal of signal peptides from prolipoproteins. This Pseudomonas fluorescens (strain Pf0-1) protein is Lipoprotein signal peptidase.